Reading from the N-terminus, the 91-residue chain is Large ribosomal subunit protein bL27 (91 aa).

Positions Met-1–Gly-13 are enriched in polar residues. Positions Met-1–Arg-20 are disordered.

This sequence belongs to the bacterial ribosomal protein bL27 family.

In Anaplasma phagocytophilum (strain HZ), this protein is Large ribosomal subunit protein bL27.